A 346-amino-acid chain; its full sequence is S-adenosylmethionine:tRNA ribosyltransferase-isomerase (346 aa).

The protein belongs to the QueA family. In terms of assembly, monomer.

The protein localises to the cytoplasm. It carries out the reaction 7-aminomethyl-7-carbaguanosine(34) in tRNA + S-adenosyl-L-methionine = epoxyqueuosine(34) in tRNA + adenine + L-methionine + 2 H(+). It participates in tRNA modification; tRNA-queuosine biosynthesis. Functionally, transfers and isomerizes the ribose moiety from AdoMet to the 7-aminomethyl group of 7-deazaguanine (preQ1-tRNA) to give epoxyqueuosine (oQ-tRNA). The protein is S-adenosylmethionine:tRNA ribosyltransferase-isomerase of Lactococcus lactis subsp. cremoris (strain MG1363).